The following is a 523-amino-acid chain: 2-isopropylmalate synthase (523 aa).

A Pyruvate carboxyltransferase domain is found at 5–267 (VIIFDTTLRD…HTAINHQEIW (263 aa)). D14, H202, H204, and N238 together coordinate Mn(2+). Residues 392–523 (RLDYFSVQSG…QHNENNKETV (132 aa)) are regulatory domain.

It belongs to the alpha-IPM synthase/homocitrate synthase family. LeuA type 1 subfamily. Homodimer. Mn(2+) serves as cofactor.

It localises to the cytoplasm. It carries out the reaction 3-methyl-2-oxobutanoate + acetyl-CoA + H2O = (2S)-2-isopropylmalate + CoA + H(+). Its pathway is amino-acid biosynthesis; L-leucine biosynthesis; L-leucine from 3-methyl-2-oxobutanoate: step 1/4. In terms of biological role, catalyzes the condensation of the acetyl group of acetyl-CoA with 3-methyl-2-oxobutanoate (2-ketoisovalerate) to form 3-carboxy-3-hydroxy-4-methylpentanoate (2-isopropylmalate). The chain is 2-isopropylmalate synthase from Escherichia coli O157:H7.